Consider the following 181-residue polypeptide: Large ribosomal subunit protein uL6 (181 aa).

The protein belongs to the universal ribosomal protein uL6 family. As to quaternary structure, part of the 50S ribosomal subunit.

Functionally, this protein binds to the 23S rRNA, and is important in its secondary structure. It is located near the subunit interface in the base of the L7/L12 stalk, and near the tRNA binding site of the peptidyltransferase center. In Hydrogenobaculum sp. (strain Y04AAS1), this protein is Large ribosomal subunit protein uL6.